Here is a 312-residue protein sequence, read N- to C-terminus: Olfactory receptor 2M5 (312 aa).

Over 1 to 25 (MAWENQTFNSDFILLGIFNHSPTHT) the chain is Extracellular. An N-linked (GlcNAc...) asparagine glycan is attached at Asn-5. The helical transmembrane segment at 26 to 49 (FLFFLVLAIFSVAFMGNSVMVLLI) threads the bilayer. Topologically, residues 50–57 (YLDTQLHT) are cytoplasmic. A helical membrane pass occupies residues 58–79 (PMYFLLSQLFLMDLMLICSTVP). The Extracellular portion of the chain corresponds to 80–100 (KMAFNYLSGSKSISMAGCATQ). Cys-97 and Cys-189 are oxidised to a cystine. The chain crosses the membrane as a helical span at residues 101–120 (IFFYVSLLGSECFLLAVMSY). Residues 121–139 (DRYIAICHPLRYTNLMRPK) lie on the Cytoplasmic side of the membrane. A helical membrane pass occupies residues 140–158 (ICGLMTAFSWILGSMDAII). At 159–195 (DAVATFSFSYCGSREIAHFFCDFPSLLILSCNDTSIF) the chain is on the extracellular side. A helical membrane pass occupies residues 196-219 (EKVLFICCIVMIVFPVAIIIASYA). The Cytoplasmic segment spans residues 220 to 236 (RVILAVIHMGSGEGRRK). Residues 237–259 (AFTTCSSHLMVVGMYYGAGLFMY) traverse the membrane as a helical segment. The Extracellular segment spans residues 260–272 (IRPTSDRSPMQDK). The chain crosses the membrane as a helical span at residues 273 to 292 (LVSVFYTILTPMLNPLIYSL). At 293 to 311 (RNKEVTRALRKVLGKGKCG) the chain is on the cytoplasmic side.

The protein belongs to the G-protein coupled receptor 1 family.

The protein localises to the cell membrane. Functionally, odorant receptor. This is Olfactory receptor 2M5 (OR2M5) from Homo sapiens (Human).